We begin with the raw amino-acid sequence, 601 residues long: Elongation factor 4 (601 aa).

A tr-type G domain is found at 7-189 (DNIRNFSIVA…AIVKRLPAPK (183 aa)). Residues 19–24 (DHGKST) and 136–139 (NKVD) each bind GTP.

This sequence belongs to the TRAFAC class translation factor GTPase superfamily. Classic translation factor GTPase family. LepA subfamily.

The protein resides in the cell inner membrane. The enzyme catalyses GTP + H2O = GDP + phosphate + H(+). Required for accurate and efficient protein synthesis under certain stress conditions. May act as a fidelity factor of the translation reaction, by catalyzing a one-codon backward translocation of tRNAs on improperly translocated ribosomes. Back-translocation proceeds from a post-translocation (POST) complex to a pre-translocation (PRE) complex, thus giving elongation factor G a second chance to translocate the tRNAs correctly. Binds to ribosomes in a GTP-dependent manner. This chain is Elongation factor 4, found in Methylorubrum extorquens (strain CM4 / NCIMB 13688) (Methylobacterium extorquens).